The sequence spans 77 residues: Small ribosomal subunit protein bS18 (77 aa).

Belongs to the bacterial ribosomal protein bS18 family. Part of the 30S ribosomal subunit. Forms a tight heterodimer with protein bS6.

Functionally, binds as a heterodimer with protein bS6 to the central domain of the 16S rRNA, where it helps stabilize the platform of the 30S subunit. This is Small ribosomal subunit protein bS18 from Bacillus cytotoxicus (strain DSM 22905 / CIP 110041 / 391-98 / NVH 391-98).